A 997-amino-acid polypeptide reads, in one-letter code: Autophagy-related protein 9 (997 aa).

Residues Met-1 to Gly-318 are Cytoplasmic-facing. Ser-19 carries the phosphoserine; by ATG1 modification. Over residues Val-29 to Ser-39 the composition is skewed to polar residues. The disordered stretch occupies residues Val-29–Glu-88. Residues Thr-79–Glu-88 show a composition bias toward acidic residues. Glycyl lysine isopeptide (Lys-Gly) (interchain with G-Cter in ubiquitin) cross-links involve residues Lys-113 and Lys-121. The residue at position 122 (Ser-122) is a Phosphoserine. Disordered stretches follow at residues Val-128–Asp-159 and Ile-213–Gly-235. Residue Lys-138 forms a Glycyl lysine isopeptide (Lys-Gly) (interchain with G-Cter in ubiquitin) linkage. A phosphoserine mark is found at Ser-143 and Ser-144. Over residues Ser-144 to Asp-159 the composition is skewed to acidic residues. Positions Ala-221–Lys-233 are enriched in polar residues. Residues Phe-319–Val-339 form a helical membrane-spanning segment. Over Ser-340–Lys-376 the chain is Lumenal. The helical transmembrane segment at Phe-377–Val-397 threads the bilayer. Residues Gln-398–Ala-538 are Cytoplasmic-facing. Residues Gly-539 to Phe-559 lie within the membrane without spanning it. The Cytoplasmic segment spans residues Arg-560–Leu-620. Residues Phe-621–Val-641 form a helical membrane-spanning segment. At Phe-642–Arg-656 the chain is on the lumenal side. A Phosphoserine; by ATG1 modification is found at Ser-657. A helical transmembrane segment spans residues Ser-657 to Thr-677. The Cytoplasmic portion of the chain corresponds to Gln-678–Arg-723. Lys-701 participates in a covalent cross-link: Glycyl lysine isopeptide (Lys-Gly) (interchain with G-Cter in ubiquitin). The stretch at Ile-724–Ser-744 is an intramembrane region. The Cytoplasmic segment spans residues Leu-745–Arg-997. Phosphoserine is present on residues Ser-787 and Ser-792. Phosphothreonine is present on Thr-794. Residue Ser-802 is modified to Phosphoserine; by ATG1. Thr-804 bears the Phosphothreonine; by ATG1 mark. Ser-831 and Ser-842 each carry phosphoserine; by ATG1. Ser-864 is modified (phosphoserine). A phosphoserine; by ATG1 mark is found at Ser-948 and Ser-969.

The protein belongs to the ATG9 family. In terms of assembly, homotrimer; forms a homotrimer with a central pore that forms a path between the two membrane leaflets. Interacts with ATG23 and ATG27 to form a cycling complex for trafficking to the PAS. Interacts (via N-terminus) with ATG11, required for recruitment of ATG9 to the PAS for the Cvt pathway during nutrient-rich conditions. Interacts (via N-terminus) with ATG17; required for recruitment to the PAS during autophagy and starved conditions. Interacts with ATG2 and ATG18; required for the retrieval of ATG9 from the PAS to the cytoplasmic pool. Interacts with ATG41. Interacts with the conserved oligomeric Golgi (COG) complex subunits COG3 and COG4. Interacts with TRS85. In terms of processing, phosphorylated by ATG1; phosphorylation is required for autophagy and cytoplasm to vacuole transport (Cvt) vesicle formation. Phosphorylation by ATG1 regulates ATG18 interaction and preautophagosome elongation. Phosphorylation at Ser-122 is required for selective autophagy by regulating anterograde trafficking and interaction with ATG23 and ATG27. Phosphorylation at Ser-122 prevents ubiquitination by the SCF(MET30) complex. Post-translationally, ubiquitinated by the SCF(MET30) complex in normal conditions, leading to its degradation by the proteasome, thereby preventing inappropriate induction of autophagy. Ubiquitination by the SCF(MET30) complex is prevented by phosphorylation at Ser-122.

It localises to the preautophagosomal structure membrane. The protein resides in the cytoplasmic vesicle membrane. Its subcellular location is the golgi apparatus membrane. It is found in the endoplasmic reticulum membrane. The protein localises to the mitochondrion membrane. It carries out the reaction a 1,2-diacyl-sn-glycero-3-phosphocholine(in) = a 1,2-diacyl-sn-glycero-3-phosphocholine(out). The enzyme catalyses a 1,2-diacyl-sn-glycero-3-phospho-L-serine(in) = a 1,2-diacyl-sn-glycero-3-phospho-L-serine(out). The catalysed reaction is a 1,2-diacyl-sn-glycero-3-phosphoethanolamine(in) = a 1,2-diacyl-sn-glycero-3-phosphoethanolamine(out). It catalyses the reaction a 1,2-diacyl-sn-glycero-3-phospho-(1D-myo-inositol-3-phosphate)(in) = a 1,2-diacyl-sn-glycero-3-phospho-(1D-myo-inositol-3-phosphate)(out). In terms of biological role, phospholipid scramblase involved in autophagy and cytoplasm to vacuole transport (Cvt) vesicle formation. Cycles between the preautophagosomal structure/phagophore assembly site (PAS) and the cytoplasmic vesicle pool and supplies membrane for the growing autophagosome. Lipid scramblase activity plays a key role in preautophagosomal structure/phagophore assembly by distributing the phospholipids that arrive through ATG2 from the cytoplasmic to the luminal leaflet of the bilayer, thereby driving autophagosomal membrane expansion. Required for mitophagy. Also involved in endoplasmic reticulum-specific autophagic process and is essential for the survival of cells subjected to severe ER stress. Recruits vesicle-tethering proteins TRS85 and YPT1 to the autophagosome formation site. Also recruits ATG23 and ATG8 to the PAS. This is Autophagy-related protein 9 from Saccharomyces cerevisiae (strain ATCC 204508 / S288c) (Baker's yeast).